We begin with the raw amino-acid sequence, 38 residues long: SDRCKDLGISIDEENNRRLVVKDGDPLAVRFVKANRRG.

The protein belongs to the protease inhibitor I3 (leguminous Kunitz-type inhibitor) family. In terms of assembly, heterodimer of an alpha and a beta chain linked by a disulfide bond.

In terms of biological role, inhibition of trypsin. The chain is Kunitz-type trypsin inhibitor beta chain from Neltuma juliflora (Mesquite).